We begin with the raw amino-acid sequence, 507 residues long: ATP synthase subunit alpha, chloroplastic (507 aa).

Residue 170-177 (GDRQTGKT) participates in ATP binding.

It belongs to the ATPase alpha/beta chains family. In terms of assembly, F-type ATPases have 2 components, CF(1) - the catalytic core - and CF(0) - the membrane proton channel. CF(1) has five subunits: alpha(3), beta(3), gamma(1), delta(1), epsilon(1). CF(0) has four main subunits: a, b, b' and c.

The protein resides in the plastid. Its subcellular location is the chloroplast thylakoid membrane. The catalysed reaction is ATP + H2O + 4 H(+)(in) = ADP + phosphate + 5 H(+)(out). Produces ATP from ADP in the presence of a proton gradient across the membrane. The alpha chain is a regulatory subunit. This Ceratophyllum demersum (Rigid hornwort) protein is ATP synthase subunit alpha, chloroplastic.